A 305-amino-acid chain; its full sequence is Coenzyme PQQ synthesis protein B (305 aa).

It belongs to the PqqB family.

It functions in the pathway cofactor biosynthesis; pyrroloquinoline quinone biosynthesis. May be involved in the transport of PQQ or its precursor to the periplasm. The protein is Coenzyme PQQ synthesis protein B of Cupriavidus necator (strain ATCC 17699 / DSM 428 / KCTC 22496 / NCIMB 10442 / H16 / Stanier 337) (Ralstonia eutropha).